Reading from the N-terminus, the 388-residue chain is (S)-8-oxocitronellyl enol synthase ISY1 (388 aa).

Residues 35-37 (TGI), 63-64 (RR), 81-82 (DV), 105-106 (TW), and glutamine 143 each bind NADP(+). Residues lysine 147 and tyrosine 178 contribute to the active site. Residues tyrosine 178, isoleucine 205, and 212-214 (SMM) each bind NADP(+).

Belongs to the short-chain dehydrogenases/reductases (SDR) family.

The enzyme catalyses (S)-8-oxocitronellyl enol + NADP(+) = (6E)-8-oxogeranial + NADPH + H(+). It carries out the reaction (S)-8-oxocitronellyl enol + NAD(+) = (6E)-8-oxogeranial + NADH + H(+). In terms of biological role, iridoid synthase that catalyzes the first step in generation of the iridoid ring scaffold using the linear monoterpene (6E)-8-oxogeranial as substrate. Iridoids comprise a large family of distinctive bicyclic monoterpenes that possess a wide range of pharmacological activities, including anticancer, anti-inflammatory, antifungal and antibacterial activities. Catalyzes the conversion of the linear monoterpene (6E)-8-oxogeranial to (S)-8-oxocitronellyl enol, a precursor of nepetalactones, which are metabolites that are both insect-repellent and have euphoric effect in cats. The chain is (S)-8-oxocitronellyl enol synthase ISY1 from Nepeta racemosa (Catmint).